A 152-amino-acid polypeptide reads, in one-letter code: Ribosomal RNA large subunit methyltransferase H (152 aa).

S-adenosyl-L-methionine-binding positions include Leu-65, Gly-96, and 115–120; that span reads LGPMTW.

The protein belongs to the RNA methyltransferase RlmH family. In terms of assembly, homodimer.

It localises to the cytoplasm. The enzyme catalyses pseudouridine(1915) in 23S rRNA + S-adenosyl-L-methionine = N(3)-methylpseudouridine(1915) in 23S rRNA + S-adenosyl-L-homocysteine + H(+). In terms of biological role, specifically methylates the pseudouridine at position 1915 (m3Psi1915) in 23S rRNA. The protein is Ribosomal RNA large subunit methyltransferase H of Gluconacetobacter diazotrophicus (strain ATCC 49037 / DSM 5601 / CCUG 37298 / CIP 103539 / LMG 7603 / PAl5).